Reading from the N-terminus, the 54-residue chain is Large ribosomal subunit protein bL33B (54 aa).

This sequence belongs to the bacterial ribosomal protein bL33 family.

This is Large ribosomal subunit protein bL33B from Saccharopolyspora erythraea (strain ATCC 11635 / DSM 40517 / JCM 4748 / NBRC 13426 / NCIMB 8594 / NRRL 2338).